We begin with the raw amino-acid sequence, 246 residues long: tRNA (guanine-N(1)-)-methyltransferase (246 aa).

S-adenosyl-L-methionine is bound by residues glycine 114 and 134–139; that span reads IGDYIL.

This sequence belongs to the RNA methyltransferase TrmD family. Homodimer.

Its subcellular location is the cytoplasm. The enzyme catalyses guanosine(37) in tRNA + S-adenosyl-L-methionine = N(1)-methylguanosine(37) in tRNA + S-adenosyl-L-homocysteine + H(+). Specifically methylates guanosine-37 in various tRNAs. The protein is tRNA (guanine-N(1)-)-methyltransferase of Coxiella burnetii (strain RSA 331 / Henzerling II).